We begin with the raw amino-acid sequence, 306 residues long: MQNIVDSIYQEMRSRTDRGKVANYIPQLACVDPNQFALTVVTQEGEVFSAGCAQTLFSIQSISKVFTLTMALGKLGDALWAQVGREPSGDPFNSIVQLEHEGGIPRNPFINAGAIAVADAIMGHNEPKETLAEILHFVRFVANDDSISIDEKVAQSEMMTGSRNASLAHFMASFERLENPVDKVLGTYFHHCSISMTTEQLARAGMFLVSNGTNHCTGMRVVPEHRARRINSLMLMCGHYDGSGEFAYRVGLPGKSGVGGGILAIAPGKASIAVWSPGLDKIGNSKLGTEALEMLVQETGWSIFGH.

Substrate-binding residues include Ser-61, Asn-111, Glu-157, Asn-164, Tyr-188, Tyr-240, and Val-258.

Belongs to the glutaminase family. In terms of assembly, homotetramer.

The enzyme catalyses L-glutamine + H2O = L-glutamate + NH4(+). This Pseudoalteromonas atlantica (strain T6c / ATCC BAA-1087) protein is Glutaminase.